A 210-amino-acid polypeptide reads, in one-letter code: Chaperone protein TorD (210 aa).

It belongs to the TorD/DmsD family. TorD subfamily.

It localises to the cytoplasm. Involved in the biogenesis of TorA. Acts on TorA before the insertion of the molybdenum cofactor and, as a result, probably favors a conformation of the apoenzyme that is competent for acquiring the cofactor. In Salmonella schwarzengrund (strain CVM19633), this protein is Chaperone protein TorD.